A 349-amino-acid polypeptide reads, in one-letter code: MIDSNRKWSLIMKNTLHNLVKTELHCHLDGSLSFETIRELAEMANIALPESDSELAKLVTVPEDSETLLDYLKTFDFIRPLLQTQKALSLAAYDVAKQAAAEHVLYIEIRFAPELSMDKGLSAVQVVEAVEKGLQKAQRDFNIVAKVLICGMRQSSKQLTKEIFRQINQAKSLEFAGFDFAGNEHDFPPQEIADLIRFTQRLDRPMTFHAGECGCPSHIAQSIALGIKRLGHVTAIHDHPELIADFVENKVTAELCLTSNLQTKAAKSLAEFPYQELYEAGAKITINTDNRTVSNTNLTKEYQLFVDYFGTSLADFYHFNQNAIEASFASEAEKAELLAELKKAYGQTD.

Zn(2+) is bound by residues H25 and H27. The substrate site is built by H27, D29, and G182. A Zn(2+)-binding site is contributed by H209. E212 acts as the Proton donor in catalysis. Zn(2+) is bound at residue D289.

This sequence belongs to the metallo-dependent hydrolases superfamily. Adenosine and AMP deaminases family. Adenosine deaminase subfamily. Requires Zn(2+) as cofactor.

The enzyme catalyses adenosine + H2O + H(+) = inosine + NH4(+). It carries out the reaction 2'-deoxyadenosine + H2O + H(+) = 2'-deoxyinosine + NH4(+). Functionally, catalyzes the hydrolytic deamination of adenosine and 2-deoxyadenosine. In Streptococcus mutans serotype c (strain ATCC 700610 / UA159), this protein is Adenosine deaminase.